The primary structure comprises 311 residues: Olfactory receptor 5AN1 (311 aa).

The Extracellular segment spans residues 1–26 (MTGGGNITEITYFILLGFSDFPRIIK). Asparagine 6 is a glycosylation site (N-linked (GlcNAc...) asparagine). Residues 27–47 (VLFTIFLVIYITSLAWNLSLI) traverse the membrane as a helical segment. The Cytoplasmic segment spans residues 48–55 (VLIRMDSH). The helical transmembrane segment at 56–76 (LHTPMYFFLSNLSFIDVCYIS) threads the bilayer. The Extracellular portion of the chain corresponds to 77–100 (STVPKMLSNLLQEQQTITFVGCII). An intrachain disulfide couples cysteine 98 to cysteine 190. Residues 101 to 121 (QYFIFSTMGLSESCLMTAMAY) form a helical membrane-spanning segment. The Cytoplasmic segment spans residues 122–134 (DRYAAICNPLLYS). Residues 135 to 155 (SIMSPTLCVWMVLGAYMTGLT) form a helical membrane-spanning segment. At 156–197 (ASLFQIGALLQLHFCGSNVIRHFFCDMPQLLILSCTDTFFVQ) the chain is on the extracellular side. The chain crosses the membrane as a helical span at residues 198–218 (VMTAILTMFFGIASALVIMIS). At 219-238 (YGYIGISIMKITSAKGRSKA) the chain is on the cytoplasmic side. Residues 239 to 259 (FNTCASHLTAVSLFYTSGIFV) traverse the membrane as a helical segment. Over 260–272 (YLSSSSGGSSSFD) the chain is Extracellular. The helical transmembrane segment at 273 to 293 (RFASVFYTVVIPMLNPLIYSL) threads the bilayer. The Cytoplasmic portion of the chain corresponds to 294–311 (RNKEIKDALKRLQKRKCC).

The protein belongs to the G-protein coupled receptor 1 family.

The protein localises to the cell membrane. Odorant receptor for musk, which specifically recognizes muscone, musk xylol, and musk ketone. Ligand-binding causes a conformation change that triggers signaling via G(s)-class of G alpha protein GNAL, activating adenylyl cyclase. This chain is Olfactory receptor 5AN1, found in Homo sapiens (Human).